We begin with the raw amino-acid sequence, 397 residues long: MSWLFPLTKSASSSAAGSPGGLTSLQQQKQRLIESLRNSHSSIAEIQKDVEYRLPFTINNLTININILLPPQFPQEKPVISVYPPIRHHLMDKQGVYVTSPLVNNFTMHSDLGKIIQSLLDEFWKNPPVLAPTSTAFPYLYSNPSGMSPYASQGFPFLPPYPPQEANRSITSLSVADTVSSSTTSHTTAKPAAPSFGVLSNLPLPIPTVDASIPTSQNGFGYKMPDVPDAFPELSELSVSQLTDMNEQEEVLLEQFLTLPQLKQIITDKDDLVKSIEELARKNLLLEPSLEAKRQTVLDKYELLTQMKSTFEKKMQRQHELSESCSASALQARLKVAAHEAEEESDNIAEDFLEGKMEIDDFLSSFMEKRTICHCRRAKEEKLQQAIAMHSQFHAPL.

The interval 1–22 (MSWLFPLTKSASSSAAGSPGGL) is disordered. Position 18 is a phosphoserine (Ser-18). Positions 308–397 (KSTFEKKMQR…AMHSQFHAPL (90 aa)) constitute a VPS37 C-terminal domain.

The protein belongs to the VPS37 family. As to quaternary structure, component of the ESCRT-I complex (endosomal sorting complex required for transport I) which consists of TSG101, VPS28, a VPS37 protein (VPS37A to -D) and MVB12A or MVB12B in a 1:1:1:1 stoichiometry. Interacts with TSG101, VPS28 and HGS. Component of an ESCRT-I complex (endosomal sorting complex required for transport I) which consists of TSG101, VPS28, VPS37A and UBAP1 in a 1:1:1:1 stoichiometry. In terms of tissue distribution, widely expressed. Examined tissues include heart, brain, placenta, liver, skeletal muscle, kidney and pancreas. More abundant in liver. Strongly decreased or undetected in hepatomas.

Its subcellular location is the late endosome membrane. It localises to the nucleus. Component of the ESCRT-I complex, a regulator of vesicular trafficking process. Required for the sorting of endocytic ubiquitinated cargos into multivesicular bodies. May be involved in cell growth and differentiation. In Homo sapiens (Human), this protein is Vacuolar protein sorting-associated protein 37A (VPS37A).